Consider the following 226-residue polypeptide: Ribonuclease 3 (226 aa).

The 123-residue stretch at 6 to 128 (VNQLQKKLGY…LIGAIFLDSD (123 aa)) folds into the RNase III domain. Residue Glu41 coordinates Mg(2+). The active site involves Asp45. Positions 114 and 117 each coordinate Mg(2+). Residue Glu117 is part of the active site. A DRBM domain is found at 155-225 (DPKTRLQEYL…AEQALIQLEL (71 aa)).

This sequence belongs to the ribonuclease III family. Homodimer. Mg(2+) is required as a cofactor.

The protein localises to the cytoplasm. The catalysed reaction is Endonucleolytic cleavage to 5'-phosphomonoester.. Its function is as follows. Digests double-stranded RNA. Involved in the processing of primary rRNA transcript to yield the immediate precursors to the large and small rRNAs (23S and 16S). Processes some mRNAs, and tRNAs when they are encoded in the rRNA operon. Processes pre-crRNA and tracrRNA of type II CRISPR loci if present in the organism. This chain is Ribonuclease 3, found in Proteus mirabilis (strain HI4320).